A 448-amino-acid chain; its full sequence is tRNA-2-methylthio-N(6)-dimethylallyladenosine synthase (448 aa).

The MTTase N-terminal domain maps to 3–119 (GRVYVKTHGC…LPEMIDRARD (117 aa)). Residues Cys12, Cys49, Cys82, Cys156, Cys160, and Cys163 each contribute to the [4Fe-4S] cluster site. The region spanning 142 to 374 (RAEGPTAFVS…QETINANARR (233 aa)) is the Radical SAM core domain. The TRAM domain maps to 377–440 (ESMVGTVQRV…PNSLRGELLG (64 aa)).

The protein belongs to the methylthiotransferase family. MiaB subfamily. As to quaternary structure, monomer. Requires [4Fe-4S] cluster as cofactor.

Its subcellular location is the cytoplasm. The enzyme catalyses N(6)-dimethylallyladenosine(37) in tRNA + (sulfur carrier)-SH + AH2 + 2 S-adenosyl-L-methionine = 2-methylsulfanyl-N(6)-dimethylallyladenosine(37) in tRNA + (sulfur carrier)-H + 5'-deoxyadenosine + L-methionine + A + S-adenosyl-L-homocysteine + 2 H(+). Its function is as follows. Catalyzes the methylthiolation of N6-(dimethylallyl)adenosine (i(6)A), leading to the formation of 2-methylthio-N6-(dimethylallyl)adenosine (ms(2)i(6)A) at position 37 in tRNAs that read codons beginning with uridine. The chain is tRNA-2-methylthio-N(6)-dimethylallyladenosine synthase from Alkalilimnicola ehrlichii (strain ATCC BAA-1101 / DSM 17681 / MLHE-1).